The primary structure comprises 154 residues: 6,7-dimethyl-8-ribityllumazine synthase (154 aa).

5-amino-6-(D-ribitylamino)uracil contacts are provided by residues F26, 60–62 (ALE), and 84–86 (CII). 89–90 (ET) lines the (2S)-2-hydroxy-3-oxobutyl phosphate pocket. H92 acts as the Proton donor in catalysis. N117 provides a ligand contact to 5-amino-6-(D-ribitylamino)uracil. R131 contacts (2S)-2-hydroxy-3-oxobutyl phosphate.

It belongs to the DMRL synthase family.

The enzyme catalyses (2S)-2-hydroxy-3-oxobutyl phosphate + 5-amino-6-(D-ribitylamino)uracil = 6,7-dimethyl-8-(1-D-ribityl)lumazine + phosphate + 2 H2O + H(+). It participates in cofactor biosynthesis; riboflavin biosynthesis; riboflavin from 2-hydroxy-3-oxobutyl phosphate and 5-amino-6-(D-ribitylamino)uracil: step 1/2. Its function is as follows. Catalyzes the formation of 6,7-dimethyl-8-ribityllumazine by condensation of 5-amino-6-(D-ribitylamino)uracil with 3,4-dihydroxy-2-butanone 4-phosphate. This is the penultimate step in the biosynthesis of riboflavin. The chain is 6,7-dimethyl-8-ribityllumazine synthase from Polaromonas sp. (strain JS666 / ATCC BAA-500).